The chain runs to 170 residues: uncharacterized protein (170 aa).

It belongs to the mimivirus L223/L227/L812 family.

This is an uncharacterized protein from Acanthamoeba polyphaga mimivirus (APMV).